Reading from the N-terminus, the 501-residue chain is ATP synthase subunit alpha (501 aa).

169–176 provides a ligand contact to ATP; the sequence is GDRQTGKT.

Belongs to the ATPase alpha/beta chains family. In terms of assembly, F-type ATPases have 2 components, CF(1) - the catalytic core - and CF(0) - the membrane proton channel. CF(1) has five subunits: alpha(3), beta(3), gamma(1), delta(1), epsilon(1). CF(0) has three main subunits: a(1), b(2) and c(9-12). The alpha and beta chains form an alternating ring which encloses part of the gamma chain. CF(1) is attached to CF(0) by a central stalk formed by the gamma and epsilon chains, while a peripheral stalk is formed by the delta and b chains.

The protein resides in the cell membrane. It catalyses the reaction ATP + H2O + 4 H(+)(in) = ADP + phosphate + 5 H(+)(out). Functionally, produces ATP from ADP in the presence of a proton gradient across the membrane. The alpha chain is a regulatory subunit. The polypeptide is ATP synthase subunit alpha (Streptococcus equi subsp. equi (strain 4047)).